Consider the following 488-residue polypeptide: Probable apyrase 5 (488 aa).

Positions 1 to 26 (MDALKVQILPDNQSSPSSTHMLTKPK) are disordered. Over 1–32 (MDALKVQILPDNQSSPSSTHMLTKPKSKKATK) the chain is Cytoplasmic. The span at 10 to 21 (PDNQSSPSSTHM) shows a compositional bias: polar residues. A helical; Signal-anchor for type II membrane protein transmembrane segment spans residues 33–53 (SIAMLIVASLAITLGLLFVFS). Topologically, residues 54–488 (SNSVMFSASF…GKSRKMIGFK (435 aa)) are extracellular. 73 to 83 (VIIDAGSSGTR) serves as a coordination point for ATP. The active-site Proton acceptor is E196. Residue 220 to 230 (GIVELGGASAQ) participates in ATP binding. The N-linked (GlcNAc...) asparagine glycan is linked to N251.

Belongs to the GDA1/CD39 NTPase family. The cofactor is Ca(2+). Highly expressed in young rosette leaves but only weakly in roots.

The protein resides in the membrane. The catalysed reaction is a ribonucleoside 5'-triphosphate + 2 H2O = a ribonucleoside 5'-phosphate + 2 phosphate + 2 H(+). Catalyzes the hydrolysis of phosphoanhydride bonds of nucleoside tri- and di-phosphates. The polypeptide is Probable apyrase 5 (APY5) (Arabidopsis thaliana (Mouse-ear cress)).